The chain runs to 323 residues: 4-hydroxyphenylpyruvate 3-dimethylallyltransferase (323 aa).

Residues arginine 160 and glutamate 281 each contribute to the substrate site.

It belongs to the aromatic prenyltransferase family. As to quaternary structure, monomer.

It is found in the cytoplasm. The catalysed reaction is 3-(4-hydroxyphenyl)pyruvate + dimethylallyl diphosphate = 3-dimethylallyl-4-hydroxyphenylpyruvate + diphosphate. It functions in the pathway antibiotic biosynthesis; novobiocin biosynthesis. Functionally, magnesium-independent aromatic prenyltransferase that catalyzes the irreversible transfer of a dimethylallyl group to 4-hydroxyphenylpyruvate to produce the ring A structure in the novobiocin biosynthesis pathway. Novobiocin is an aminocoumarin family antibiotic that targets bacterial DNA gyrases. It is able to prenylate many different compounds, including the phenylpropanoids 4-coumarate and caffeate, the plant polyketide resveratrol, the (iso)flavonoid naringenin, apigenin, daidzein and genistein, and the dihydroxynaphthalenes 1,6-DHN and 2,7-DHN. This is 4-hydroxyphenylpyruvate 3-dimethylallyltransferase from Streptomyces niveus (Streptomyces spheroides).